A 396-amino-acid polypeptide reads, in one-letter code: Alanine racemase (396 aa).

Lysine 46 serves as the catalytic Proton acceptor; specific for D-alanine. Lysine 46 carries the post-translational modification N6-(pyridoxal phosphate)lysine. Arginine 145 serves as a coordination point for substrate. Tyrosine 280 acts as the Proton acceptor; specific for L-alanine in catalysis. Methionine 328 provides a ligand contact to substrate.

Belongs to the alanine racemase family. Pyridoxal 5'-phosphate is required as a cofactor.

It carries out the reaction L-alanine = D-alanine. The protein operates within amino-acid biosynthesis; D-alanine biosynthesis; D-alanine from L-alanine: step 1/1. Functionally, catalyzes the interconversion of L-alanine and D-alanine. May also act on other amino acids. This is Alanine racemase (alr) from Brucella suis (strain ATCC 23445 / NCTC 10510).